The following is a 480-amino-acid chain: ATP synthase subunit beta (480 aa).

166–173 (GGAGVGKT) provides a ligand contact to ATP.

This sequence belongs to the ATPase alpha/beta chains family. As to quaternary structure, F-type ATPases have 2 components, CF(1) - the catalytic core - and CF(0) - the membrane proton channel. CF(1) has five subunits: alpha(3), beta(3), gamma(1), delta(1), epsilon(1). CF(0) has three main subunits: a(1), b(2) and c(9-12). The alpha and beta chains form an alternating ring which encloses part of the gamma chain. CF(1) is attached to CF(0) by a central stalk formed by the gamma and epsilon chains, while a peripheral stalk is formed by the delta and b chains.

Its subcellular location is the cell membrane. The catalysed reaction is ATP + H2O + 4 H(+)(in) = ADP + phosphate + 5 H(+)(out). Functionally, produces ATP from ADP in the presence of a proton gradient across the membrane. The catalytic sites are hosted primarily by the beta subunits. The sequence is that of ATP synthase subunit beta from Streptomyces griseus subsp. griseus (strain JCM 4626 / CBS 651.72 / NBRC 13350 / KCC S-0626 / ISP 5235).